Consider the following 303-residue polypeptide: NAD kinase (303 aa).

Catalysis depends on Asp-85, which acts as the Proton acceptor. NAD(+) is bound by residues 85-86 (DG), 159-160 (ND), Arg-187, Asp-189, 200-205 (TAYALS), Ala-224, and Gln-258.

Belongs to the NAD kinase family. A divalent metal cation serves as cofactor.

It is found in the cytoplasm. It catalyses the reaction NAD(+) + ATP = ADP + NADP(+) + H(+). Functionally, involved in the regulation of the intracellular balance of NAD and NADP, and is a key enzyme in the biosynthesis of NADP. Catalyzes specifically the phosphorylation on 2'-hydroxyl of the adenosine moiety of NAD to yield NADP. This chain is NAD kinase, found in Variovorax paradoxus (strain S110).